Consider the following 238-residue polypeptide: Serine protease SplE (238 aa).

An N-terminal signal peptide occupies residues 1-36 (MNKNIIIKSIAALTILTSVTGVGTTMVEGIQQTAKA). Active-site charge relay system residues include H75, D113, and S191.

The protein belongs to the peptidase S1B family.

The protein resides in the secreted. The sequence is that of Serine protease SplE (splE) from Staphylococcus aureus.